Consider the following 30-residue polypeptide: Cliotide T20 (30 aa).

Residues 1–30 (GSAIRCGESCLLGKCYTPGCTCDRPICKKN) constitute a cross-link (cyclopeptide (Gly-Asn)). Intrachain disulfides connect cysteine 6/cysteine 20, cysteine 10/cysteine 22, and cysteine 15/cysteine 27.

Contains 3 disulfide bonds. In terms of processing, this is a cyclic peptide. As to expression, expressed in root nodules but not in seed.

Probably participates in a plant defense mechanism. Active against Gram-negative bacterium E.coli ATCC 700926 (MIC=0.5 uM) under low-salt conditions. Not active against Gram-positive bacterium S.aureus ATCC 12600 up to a concentration of 100 uM under low-salt conditions. Exhibits immunomodulatory activity but no cytotoxicity in vitro. The protein is Cliotide T20 of Clitoria ternatea (Butterfly pea).